The following is a 121-amino-acid chain: Oxalate-binding protein (121 aa).

Positions 49–117 (RMKLPPGSSV…GNTDLEFLAV (69 aa)) constitute a Cupin type-2 domain. Positions 61, 63, and 68 each coordinate Mn(2+). Position 70 (Tyr70) interacts with oxalate. His102 provides a ligand contact to Mn(2+).

Homodimer.

In terms of biological role, binds oxalate. The protein is Oxalate-binding protein of Thermotoga maritima (strain ATCC 43589 / DSM 3109 / JCM 10099 / NBRC 100826 / MSB8).